Reading from the N-terminus, the 223-residue chain is uncharacterized protein (223 aa).

A run of 2 helical transmembrane segments spans residues 1-21 and 45-65; these read MLIIGLCVVSMLLLSSNTFYL and ILIGFVLALIGFIFCSGTSLI.

The protein localises to the cell membrane. This is an uncharacterized protein from Haemophilus influenzae (strain ATCC 51907 / DSM 11121 / KW20 / Rd).